The primary structure comprises 100 residues: Small ribosomal subunit protein uS14 (100 aa).

The protein belongs to the universal ribosomal protein uS14 family. As to quaternary structure, part of the 30S ribosomal subunit. Contacts proteins S3 and S10.

Functionally, binds 16S rRNA, required for the assembly of 30S particles and may also be responsible for determining the conformation of the 16S rRNA at the A site. In Thermosynechococcus vestitus (strain NIES-2133 / IAM M-273 / BP-1), this protein is Small ribosomal subunit protein uS14.